The following is a 395-amino-acid chain: MANDYLFTSESVSEGHPDKVADQISDAILDAILAQDKYSRVAAETLCNTGLVVLAGEITTTANIDYIQIARDTIKRIGYDNTDYGIDYRGCAVLVAYDKQSPDIAQGVDRAHDNNLDQGAGDQGLMFGYACDETPELMPLPIHLSHRLVERQANLRRDGRLPWLRPDAKSQVTVRYVDGKPHSIDTVVLSTQHAPEIDLPALREAVIEEVIKPTLPADLIKGDIKFLVNPTGRFVIGGPQGDCGLTGRKIIVDTYGGAAPHGGGAFSGKDPSKVDRSAAYAGRYVAKNIVAAGLASRALIQVSYAIGVAEPTSVMVNTFGTGRVSDETITKLVREHFDLRPKGIIQMLDLLRPIYEKTAAYGHFGREEPEFSWEAADKALALAEAAGVEPAVQVA.

Position 16 (histidine 16) interacts with ATP. Residue aspartate 18 coordinates Mg(2+). Residue glutamate 44 participates in K(+) binding. 2 residues coordinate L-methionine: glutamate 57 and glutamine 100. The flexible loop stretch occupies residues 100 to 110; sequence QSPDIAQGVDR. Residues 167-169, 233-234, aspartate 242, 248-249, alanine 265, and lysine 269 contribute to the ATP site; these read DAK, RF, and RK. Aspartate 242 is an L-methionine binding site. An L-methionine-binding site is contributed by lysine 273.

This sequence belongs to the AdoMet synthase family. As to quaternary structure, homotetramer; dimer of dimers. Requires Mg(2+) as cofactor. The cofactor is K(+).

The protein localises to the cytoplasm. It catalyses the reaction L-methionine + ATP + H2O = S-adenosyl-L-methionine + phosphate + diphosphate. The protein operates within amino-acid biosynthesis; S-adenosyl-L-methionine biosynthesis; S-adenosyl-L-methionine from L-methionine: step 1/1. Catalyzes the formation of S-adenosylmethionine (AdoMet) from methionine and ATP. The overall synthetic reaction is composed of two sequential steps, AdoMet formation and the subsequent tripolyphosphate hydrolysis which occurs prior to release of AdoMet from the enzyme. The polypeptide is S-adenosylmethionine synthase (Burkholderia mallei (strain NCTC 10247)).